Consider the following 120-residue polypeptide: NAD(P)H-quinone oxidoreductase subunit 3, chloroplastic (120 aa).

3 helical membrane passes run 9–29 (IFWA…TISG), 64–84 (MFAL…PWAM), and 88–108 (VLGI…IVGS).

Belongs to the complex I subunit 3 family. As to quaternary structure, NDH is composed of at least 16 different subunits, 5 of which are encoded in the nucleus.

The protein resides in the plastid. It is found in the chloroplast thylakoid membrane. The catalysed reaction is a plastoquinone + NADH + (n+1) H(+)(in) = a plastoquinol + NAD(+) + n H(+)(out). It carries out the reaction a plastoquinone + NADPH + (n+1) H(+)(in) = a plastoquinol + NADP(+) + n H(+)(out). NDH shuttles electrons from NAD(P)H:plastoquinone, via FMN and iron-sulfur (Fe-S) centers, to quinones in the photosynthetic chain and possibly in a chloroplast respiratory chain. The immediate electron acceptor for the enzyme in this species is believed to be plastoquinone. Couples the redox reaction to proton translocation, and thus conserves the redox energy in a proton gradient. The polypeptide is NAD(P)H-quinone oxidoreductase subunit 3, chloroplastic (Lotus japonicus (Lotus corniculatus var. japonicus)).